Consider the following 205-residue polypeptide: Small ribosomal subunit protein uS4c (205 aa).

The region spanning Met93–Leu156 is the S4 RNA-binding domain.

Belongs to the universal ribosomal protein uS4 family. As to quaternary structure, part of the 30S ribosomal subunit. Contacts protein S5. The interaction surface between S4 and S5 is involved in control of translational fidelity.

Its subcellular location is the plastid. The protein resides in the chloroplast. Functionally, one of the primary rRNA binding proteins, it binds directly to 16S rRNA where it nucleates assembly of the body of the 30S subunit. Its function is as follows. With S5 and S12 plays an important role in translational accuracy. The polypeptide is Small ribosomal subunit protein uS4c (rps4) (Mesostigma viride (Green alga)).